The sequence spans 332 residues: Ferredoxin--NADP reductase (332 aa).

The FAD site is built by Asp33, Gln41, Tyr46, Ala86, Ile121, Asp282, and Ser325.

This sequence belongs to the ferredoxin--NADP reductase type 2 family. Homodimer. FAD serves as cofactor.

The enzyme catalyses 2 reduced [2Fe-2S]-[ferredoxin] + NADP(+) + H(+) = 2 oxidized [2Fe-2S]-[ferredoxin] + NADPH. The polypeptide is Ferredoxin--NADP reductase (Metallosphaera sedula (strain ATCC 51363 / DSM 5348 / JCM 9185 / NBRC 15509 / TH2)).